The chain runs to 474 residues: MLSVPDYEFWFVTGSQHLYGEEQLKSVAKDAQDIADKLNASGKLPYKVVFKDVMTTAESITNFMKEVNYNDNVAGVITWMHTFSPAKNWIRGTELLQKPLLHLATQYLNNIPYADIDFDYMNLNQSAHGDREYAYINARLNVNNKIVYGYWGDEDVQDQIARWEDVAVAYNESFKVKVARFGDTMRNVAVTEGDKVEAQIKMGWTVDYYGIGDLVEEINKVSDADVDKEYADLESKYTMVQGDNDAETYKHSVRVQLQQYLGIKRFLEKGGYTAFTTNFEDLWGMEQLPGLAAQLLIRDGYGFGAEGDWKTAALGRVMKIMSHNDRTAFMEDYTLDLRKGHEAILGSHMLEVDPTIASDKPRVEVHPLDIGGKADPARLVFTGSEGDAIDVTVADFRDGFKMIGYAVDANKPEGETPNLPVAKQLWTPKVGLKTGALEWMKAGGGHHTMLSFSLTEEQMEDFATMVGMTKAFIK.

The Mn(2+) site is built by Glu-306, Glu-331, His-348, and His-447.

The protein belongs to the arabinose isomerase family. The cofactor is Mn(2+).

It carries out the reaction beta-L-arabinopyranose = L-ribulose. It functions in the pathway carbohydrate degradation; L-arabinose degradation via L-ribulose; D-xylulose 5-phosphate from L-arabinose (bacterial route): step 1/3. Its function is as follows. Catalyzes the conversion of L-arabinose to L-ribulose. The polypeptide is L-arabinose isomerase (Levilactobacillus brevis (strain ATCC 367 / BCRC 12310 / CIP 105137 / JCM 1170 / LMG 11437 / NCIMB 947 / NCTC 947) (Lactobacillus brevis)).